A 127-amino-acid polypeptide reads, in one-letter code: Translation initiation factor 5A (127 aa).

Lys35 is subject to Hypusine.

The protein belongs to the eIF-5A family.

It localises to the cytoplasm. In terms of biological role, functions by promoting the formation of the first peptide bond. This chain is Translation initiation factor 5A (eIF5A), found in Methanothrix thermoacetophila (strain DSM 6194 / JCM 14653 / NBRC 101360 / PT) (Methanosaeta thermophila).